The sequence spans 348 residues: MVSNLLKVVLAIETSCDETAVAVVRSDKQVLSHKVLSQKEHVVYGGVVPEIASRAHINYLYDLTSQSIEESGCDLADIDAIAVTSGPGLIGGLIIGVMMAKAISSVTNKPIIEVNHLEAHTLLIRMFHDIDFPFLVLIISGGHCQFLIVHDVGCYQRLGSSLDDSLGEVFDKVARMLNLGYPGGPIIEQKSIMGDSKSFFLPRALINRFGCDFSFSGIKTAVRNIVVNQKYIDNDFICNISASFQDCIGDILVNRITNAIHMSQAINCKINKLVVTGGVAANHLLRNRISICVKDNNFEVLYPPTELCTDNGIMVGWAGIENLSKGYVSNLDFAPKARWPLESIKRSS.

Residues histidine 116 and histidine 120 each contribute to the Fe cation site. Residues 138–142 (IISGG), aspartate 171, glycine 184, and asparagine 282 contribute to the substrate site. Position 310 (aspartate 310) interacts with Fe cation.

The protein belongs to the KAE1 / TsaD family. Requires Fe(2+) as cofactor.

It localises to the cytoplasm. The enzyme catalyses L-threonylcarbamoyladenylate + adenosine(37) in tRNA = N(6)-L-threonylcarbamoyladenosine(37) in tRNA + AMP + H(+). Required for the formation of a threonylcarbamoyl group on adenosine at position 37 (t(6)A37) in tRNAs that read codons beginning with adenine. Is involved in the transfer of the threonylcarbamoyl moiety of threonylcarbamoyl-AMP (TC-AMP) to the N6 group of A37, together with TsaE and TsaB. TsaD likely plays a direct catalytic role in this reaction. This is tRNA N6-adenosine threonylcarbamoyltransferase from Ehrlichia ruminantium (strain Welgevonden).